The primary structure comprises 412 residues: 1-deoxy-D-xylulose 5-phosphate reductoisomerase (412 aa).

NADPH contacts are provided by T10, G11, S12, I13, G36, K37, N38, and N130. 1-deoxy-D-xylulose 5-phosphate is bound at residue K131. E132 lines the NADPH pocket. D156 is a Mn(2+) binding site. S157, E158, S194, and H217 together coordinate 1-deoxy-D-xylulose 5-phosphate. E158 serves as a coordination point for Mn(2+). G223 serves as a coordination point for NADPH. Residues S230, N235, K236, and E239 each coordinate 1-deoxy-D-xylulose 5-phosphate. E239 is a Mn(2+) binding site.

It belongs to the DXR family. Mg(2+) serves as cofactor. It depends on Mn(2+) as a cofactor.

The catalysed reaction is 2-C-methyl-D-erythritol 4-phosphate + NADP(+) = 1-deoxy-D-xylulose 5-phosphate + NADPH + H(+). Its pathway is isoprenoid biosynthesis; isopentenyl diphosphate biosynthesis via DXP pathway; isopentenyl diphosphate from 1-deoxy-D-xylulose 5-phosphate: step 1/6. Functionally, catalyzes the NADPH-dependent rearrangement and reduction of 1-deoxy-D-xylulose-5-phosphate (DXP) to 2-C-methyl-D-erythritol 4-phosphate (MEP). The chain is 1-deoxy-D-xylulose 5-phosphate reductoisomerase from Prochlorococcus marinus (strain NATL1A).